The primary structure comprises 537 residues: Myosin-binding protein H (537 aa).

Low complexity predominate over residues 1–25 (MTGKTAPAAAKKAPAAKKAPAPASK). Residues 1-138 (MTGKTAPAAA…KPKEEPPSVP (138 aa)) are disordered. Positions 26 to 69 (KAPEPAPKEKPAPTPKEGHAPTPKEEHAPPPKEEHAPPPKEEHA) are enriched in basic and acidic residues. Over residues 87 to 104 (EQPAAPAAEHAPTPTHEA) the composition is skewed to low complexity. Over residues 112-124 (PPPAAPAEAPAPE) the composition is skewed to pro residues. The 96-residue stretch at 137–232 (VPLSLAVEEV…LEQPVLIREI (96 aa)) folds into the Fibronectin type-III 1 domain. The region spanning 236 to 324 (PRIRLPRQLR…NGAEDKAILD (89 aa)) is the Ig-like C2-type 1 domain. A Fibronectin type-III 2 domain is found at 333-428 (PPQNLKLVDV…AAGVAHIKKT (96 aa)). One can recognise an Ig-like C2-type 2 domain in the interval 444-528 (PKFTQPLTDR…VNPLGEASVD (85 aa)).

Belongs to the immunoglobulin superfamily. MyBP family. In terms of tissue distribution, skeletal muscle. Seems to be also expressed in the slow tonic ald muscle. Not detected in gizzard or heart.

Binds to myosin; probably involved in interaction with thick myofilaments in the A-band. The chain is Myosin-binding protein H (MYBPH) from Gallus gallus (Chicken).